Reading from the N-terminus, the 92-residue chain is Non-specific lipid-transfer protein 1 (92 aa).

4 cysteine pairs are disulfide-bonded: Cys-4–Cys-52, Cys-14–Cys-28, Cys-29–Cys-74, and Cys-50–Cys-88.

Belongs to the plant LTP family. In terms of tissue distribution, expressed in seeds and, at very low levels, in pulp of fruit (at protein level).

Functionally, plant non-specific lipid-transfer proteins transfer phospholipids as well as galactolipids across membranes. May play a role in wax or cutin deposition in the cell walls of expanding epidermal cells and certain secretory tissues. This is Non-specific lipid-transfer protein 1 from Actinidia deliciosa (Kiwi).